Reading from the N-terminus, the 656-residue chain is UV-damage endonuclease (656 aa).

Disordered stretches follow at residues 1–82 (MPSR…GKEQ), 119–146 (PSVV…KEPV), 175–194 (IIEP…RPPA), 241–264 (PLQF…EPQD), 492–515 (EPCD…TLPP), 550–620 (DMVP…GPYN), and 636–656 (KREV…EFDG). Low complexity predominate over residues 13–32 (TPQSESSTFSSTLDSSAPSP). Composition is skewed to basic and acidic residues over residues 48–82 (SEKD…GKEQ) and 135–146 (TNAEEREAKEPV). Residues 550-561 (DMVPYDRDDENR) are compositionally biased toward basic and acidic residues. Over residues 568–579 (APKKKKGGKRKR) the composition is skewed to basic residues. The segment covering 583–595 (EEAAEPEEVDTAA) has biased composition (acidic residues). A compositionally biased stretch (basic and acidic residues) spans 596–614 (DDVKDAPEGPKEVPEEERA). Acidic residues predominate over residues 647–656 (EVEDEGEFDG).

Belongs to the uve1/UvsE family. Mg(2+) serves as cofactor.

Endonuclease for the repair of UV-irradiated DNA. Involved in the excision of cyclobutane pyrimidine dimers (CPD) and 6-4 pyrimidine pyrimidones (6-4PP) which forms the UV damage repair (UVDR) pathway. The protein is UV-damage endonuclease (mus-18) of Neurospora crassa (strain ATCC 24698 / 74-OR23-1A / CBS 708.71 / DSM 1257 / FGSC 987).